Reading from the N-terminus, the 170-residue chain is Crossover junction endodeoxyribonuclease RuvC (170 aa).

Catalysis depends on residues Asp12, Glu72, and Asp144. Residues Asp12, Glu72, and Asp144 each coordinate Mg(2+).

The protein belongs to the RuvC family. Homodimer which binds Holliday junction (HJ) DNA. The HJ becomes 2-fold symmetrical on binding to RuvC with unstacked arms; it has a different conformation from HJ DNA in complex with RuvA. In the full resolvosome a probable DNA-RuvA(4)-RuvB(12)-RuvC(2) complex forms which resolves the HJ. The cofactor is Mg(2+).

The protein resides in the cytoplasm. It catalyses the reaction Endonucleolytic cleavage at a junction such as a reciprocal single-stranded crossover between two homologous DNA duplexes (Holliday junction).. Its function is as follows. The RuvA-RuvB-RuvC complex processes Holliday junction (HJ) DNA during genetic recombination and DNA repair. Endonuclease that resolves HJ intermediates. Cleaves cruciform DNA by making single-stranded nicks across the HJ at symmetrical positions within the homologous arms, yielding a 5'-phosphate and a 3'-hydroxyl group; requires a central core of homology in the junction. The consensus cleavage sequence is 5'-(A/T)TT(C/G)-3'. Cleavage occurs on the 3'-side of the TT dinucleotide at the point of strand exchange. HJ branch migration catalyzed by RuvA-RuvB allows RuvC to scan DNA until it finds its consensus sequence, where it cleaves and resolves the cruciform DNA. The polypeptide is Crossover junction endodeoxyribonuclease RuvC (Nitrobacter hamburgensis (strain DSM 10229 / NCIMB 13809 / X14)).